Consider the following 72-residue polypeptide: Translation initiation factor IF-1 (72 aa).

The S1-like domain occupies 1–72 (MSKEDVIEVE…SRGRIVYRFK (72 aa)).

Belongs to the IF-1 family. In terms of assembly, component of the 30S ribosomal translation pre-initiation complex which assembles on the 30S ribosome in the order IF-2 and IF-3, IF-1 and N-formylmethionyl-tRNA(fMet); mRNA recruitment can occur at any time during PIC assembly.

It localises to the cytoplasm. Functionally, one of the essential components for the initiation of protein synthesis. Stabilizes the binding of IF-2 and IF-3 on the 30S subunit to which N-formylmethionyl-tRNA(fMet) subsequently binds. Helps modulate mRNA selection, yielding the 30S pre-initiation complex (PIC). Upon addition of the 50S ribosomal subunit IF-1, IF-2 and IF-3 are released leaving the mature 70S translation initiation complex. This is Translation initiation factor IF-1 from Desulfitobacterium hafniense (strain Y51).